The sequence spans 340 residues: DNA-directed RNA polymerase subunit alpha (340 aa).

The interval 1 to 233 (MIRDEISVST…DLFIPFLRAE (233 aa)) is alpha N-terminal domain (alpha-NTD). Residues 268–340 (AFKHIFIDQS…DLPKNKFQIH (73 aa)) are alpha C-terminal domain (alpha-CTD).

Belongs to the RNA polymerase alpha chain family. As to quaternary structure, in plastids the minimal PEP RNA polymerase catalytic core is composed of four subunits: alpha, beta, beta', and beta''. When a (nuclear-encoded) sigma factor is associated with the core the holoenzyme is formed, which can initiate transcription.

It localises to the plastid. It is found in the chloroplast. It catalyses the reaction RNA(n) + a ribonucleoside 5'-triphosphate = RNA(n+1) + diphosphate. In terms of biological role, DNA-dependent RNA polymerase catalyzes the transcription of DNA into RNA using the four ribonucleoside triphosphates as substrates. The sequence is that of DNA-directed RNA polymerase subunit alpha from Cycas taitungensis (Prince sago).